The sequence spans 384 residues: Queuine tRNA-ribosyltransferase (384 aa).

Asp93 acts as the Proton acceptor in catalysis. Substrate contacts are provided by residues Asp93–Phe97, Asp147, Gln202, and Gly229. Residues Gly260–Glu266 form an RNA binding region. Asp279 acts as the Nucleophile in catalysis. Residues Thr284–Arg288 are RNA binding; important for wobble base 34 recognition. The Zn(2+) site is built by Cys317, Cys319, Cys322, and His348.

Belongs to the queuine tRNA-ribosyltransferase family. In terms of assembly, homodimer. Within each dimer, one monomer is responsible for RNA recognition and catalysis, while the other monomer binds to the replacement base PreQ1. The cofactor is Zn(2+).

It carries out the reaction 7-aminomethyl-7-carbaguanine + guanosine(34) in tRNA = 7-aminomethyl-7-carbaguanosine(34) in tRNA + guanine. Its pathway is tRNA modification; tRNA-queuosine biosynthesis. Functionally, catalyzes the base-exchange of a guanine (G) residue with the queuine precursor 7-aminomethyl-7-deazaguanine (PreQ1) at position 34 (anticodon wobble position) in tRNAs with GU(N) anticodons (tRNA-Asp, -Asn, -His and -Tyr). Catalysis occurs through a double-displacement mechanism. The nucleophile active site attacks the C1' of nucleotide 34 to detach the guanine base from the RNA, forming a covalent enzyme-RNA intermediate. The proton acceptor active site deprotonates the incoming PreQ1, allowing a nucleophilic attack on the C1' of the ribose to form the product. After dissociation, two additional enzymatic reactions on the tRNA convert PreQ1 to queuine (Q), resulting in the hypermodified nucleoside queuosine (7-(((4,5-cis-dihydroxy-2-cyclopenten-1-yl)amino)methyl)-7-deazaguanosine). This Koribacter versatilis (strain Ellin345) protein is Queuine tRNA-ribosyltransferase.